Reading from the N-terminus, the 336-residue chain is Nuclear egress protein 2 (336 aa).

The Perinuclear space segment spans residues 1–315 (MASPEERLLD…AWRYSWRATP (315 aa)). 2 disordered regions span residues 193-221 (RSGQ…GCLG) and 277-297 (RTRE…VPPE). The segment covering 277–288 (RTRETRRMRGSH) has biased composition (basic residues). Residues 316-333 (YLARVLAVTAVALLLMFL) form a helical membrane-spanning segment. Over 334–336 (RWT) the chain is Nuclear.

This sequence belongs to the herpesviridae NEC2 protein family. In terms of assembly, forms a heterodimeric viral nuclear egress complex (NEC) with NEC1. Interacts with host IKBKE; this interaction inhibits host IKBKE kinase activity and IRF3 nuclear translocation. Post-translationally, phosphorylated.

It is found in the host nucleus inner membrane. It localises to the host cytoplasm. The protein localises to the host perinuclear region. Its function is as follows. Plays an essential role in virion nuclear egress, the first step of virion release from infected cell. Within the host nucleus, NEC1 interacts with the newly formed capsid through the vertexes and directs it to the inner nuclear membrane by associating with NEC2. Induces the budding of the capsid at the inner nuclear membrane as well as its envelopment into the perinuclear space. There, the NEC1/NEC2 complex promotes the fusion of the enveloped capsid with the outer nuclear membrane and the subsequent release of the viral capsid into the cytoplasm where it will reach the secondary budding sites in the host Golgi or trans-Golgi network. Inhibits host IKBKE and IRF3, thereby impairing type I IFN signaling. The polypeptide is Nuclear egress protein 2 (Homo sapiens (Human)).